A 412-amino-acid chain; its full sequence is Multifunctional CCA protein (412 aa).

The ATP site is built by Gly8 and Arg11. Residues Gly8 and Arg11 each contribute to the CTP site. Residues Asp21 and Asp23 each coordinate Mg(2+). ATP is bound by residues Arg91, Arg137, and Arg140. CTP contacts are provided by Arg91, Arg137, and Arg140. The region spanning 228-329 (TGIHTLMTLS…VKLFDSIDAW (102 aa)) is the HD domain.

The protein belongs to the tRNA nucleotidyltransferase/poly(A) polymerase family. Bacterial CCA-adding enzyme type 1 subfamily. Monomer. Can also form homodimers and oligomers. Mg(2+) is required as a cofactor. It depends on Ni(2+) as a cofactor.

It catalyses the reaction a tRNA precursor + 2 CTP + ATP = a tRNA with a 3' CCA end + 3 diphosphate. It carries out the reaction a tRNA with a 3' CCA end + 2 CTP + ATP = a tRNA with a 3' CCACCA end + 3 diphosphate. Functionally, catalyzes the addition and repair of the essential 3'-terminal CCA sequence in tRNAs without using a nucleic acid template. Adds these three nucleotides in the order of C, C, and A to the tRNA nucleotide-73, using CTP and ATP as substrates and producing inorganic pyrophosphate. tRNA 3'-terminal CCA addition is required both for tRNA processing and repair. Also involved in tRNA surveillance by mediating tandem CCA addition to generate a CCACCA at the 3' terminus of unstable tRNAs. While stable tRNAs receive only 3'-terminal CCA, unstable tRNAs are marked with CCACCA and rapidly degraded. The polypeptide is Multifunctional CCA protein (Shigella sonnei (strain Ss046)).